Consider the following 614-residue polypeptide: UvrABC system protein C (614 aa).

A GIY-YIG domain is found at 14 to 91 (TSPGCYIHKD…IKENKPKYNI (78 aa)). A UVR domain is found at 196–231 (NKIIDELKGKMAAAAQTMEFERAAEYRDLIQAIGTL). The disordered stretch occupies residues 595-614 (LPQVAEERVDYQTEGNHNKP).

This sequence belongs to the UvrC family. In terms of assembly, interacts with UvrB in an incision complex.

The protein localises to the cytoplasm. Its function is as follows. The UvrABC repair system catalyzes the recognition and processing of DNA lesions. UvrC both incises the 5' and 3' sides of the lesion. The N-terminal half is responsible for the 3' incision and the C-terminal half is responsible for the 5' incision. The protein is UvrABC system protein C of Streptococcus pneumoniae (strain Taiwan19F-14).